Reading from the N-terminus, the 115-residue chain is MARVKRGNVARKRRNKILRLARGFQGSNGSLFRTANQRVMKALCNAYRDRRRRKRDFRRLWIARINAAARINGVSYSRLIGGLKKADVRINRKMLAQLAVMDPKSFTSVVTSAKS.

This sequence belongs to the bacterial ribosomal protein bL20 family.

In terms of biological role, binds directly to 23S ribosomal RNA and is necessary for the in vitro assembly process of the 50S ribosomal subunit. It is not involved in the protein synthesizing functions of that subunit. This chain is Large ribosomal subunit protein bL20, found in Prochlorococcus marinus (strain MIT 9313).